The primary structure comprises 252 residues: Hydroxyacylglutathione hydrolase (252 aa).

Zn(2+)-binding residues include histidine 54, histidine 56, aspartate 58, histidine 59, histidine 111, aspartate 130, and histidine 170.

Belongs to the metallo-beta-lactamase superfamily. Glyoxalase II family. In terms of assembly, monomer. Zn(2+) serves as cofactor.

The catalysed reaction is an S-(2-hydroxyacyl)glutathione + H2O = a 2-hydroxy carboxylate + glutathione + H(+). The protein operates within secondary metabolite metabolism; methylglyoxal degradation; (R)-lactate from methylglyoxal: step 2/2. Functionally, thiolesterase that catalyzes the hydrolysis of S-D-lactoyl-glutathione to form glutathione and D-lactic acid. The protein is Hydroxyacylglutathione hydrolase of Francisella tularensis subsp. holarctica (strain FTNF002-00 / FTA).